A 331-amino-acid polypeptide reads, in one-letter code: tRNA uridine(34) hydroxylase (331 aa).

The Rhodanese domain occupies 122–218 (KENRCLVLDV…YGQAVGTGKW (97 aa)). Cys-178 acts as the Cysteine persulfide intermediate in catalysis.

It belongs to the TrhO family.

It catalyses the reaction uridine(34) in tRNA + AH2 + O2 = 5-hydroxyuridine(34) in tRNA + A + H2O. In terms of biological role, catalyzes oxygen-dependent 5-hydroxyuridine (ho5U) modification at position 34 in tRNAs. This is tRNA uridine(34) hydroxylase from Chlamydia caviae (strain ATCC VR-813 / DSM 19441 / 03DC25 / GPIC) (Chlamydophila caviae).